Consider the following 126-residue polypeptide: uncharacterized protein (126 aa).

The chain crosses the membrane as a helical span at residues 55–77 (MLLINSNLVLSGLLLFIDVYRAA).

It localises to the membrane. This is an uncharacterized protein from Dictyostelium discoideum (Social amoeba).